The sequence spans 159 residues: Putative ribosomal RNA large subunit methyltransferase H (159 aa).

Residues L76, G108, and 127–132 (FSKMTF) each bind S-adenosyl-L-methionine.

This sequence belongs to the RNA methyltransferase RlmH family.

It localises to the cytoplasm. The catalysed reaction is pseudouridine(1915) in 23S rRNA + S-adenosyl-L-methionine = N(3)-methylpseudouridine(1915) in 23S rRNA + S-adenosyl-L-homocysteine + H(+). Its function is as follows. Specifically methylates the pseudouridine at position 1915 (m3Psi1915) in 23S rRNA. The protein is Putative ribosomal RNA large subunit methyltransferase H of Methanococcus maripaludis (strain C6 / ATCC BAA-1332).